The chain runs to 444 residues: Protein giant-lens (444 aa).

An N-terminal signal peptide occupies residues 1 to 24 (MPTTLMLLPCMLLLLLTAAAVAVG). Two-fingered domain 1 part repeat units lie at residues 123–165 (RDVR…CRCP) and 285–307 (CPSS…YKMC). 8 disulfide bridges follow: Cys141–Cys162, Cys147–Cys285, Cys164–Cys307, Cys316–Cys341, Cys343–Cys370, Cys378–Cys405, Cys384–Cys413, and Cys407–Cys440. Two-fingered domain repeat units follow at residues 316-370 (CTHF…LFAC) and 378-444 (CQRK…MAND). Residue Asn333 is glycosylated (N-linked (GlcNAc...) asparagine).

As to quaternary structure, interacts with spi. In terms of tissue distribution, during embryogenesis, expression is in a segmental pattern in the ectoderm and in the nervous system. In the eye imaginal disks, expression in photoreceptor cells begins a few rows posterior to the morphogenetic furrow. Also expressed in the wing disk. In the adult, expression is seen in the retina and lamina.

Its subcellular location is the secreted. Its function is as follows. Regulates cell determination; development of ommatidia and optic lobe. Is a signaling molecule involved in the process of axon pathfinding in the eye. Part of the Ras pathway regulating programmed cell death in pupal eyes; activated by lozenge (lz). Antagonist for the Egfr receptor (gurken). Inhibits Egfr signaling without interacting directly with the receptor, but instead by sequestering the Egfr-activating ligand spitz (spi). This Drosophila melanogaster (Fruit fly) protein is Protein giant-lens (aos).